Consider the following 272-residue polypeptide: Large ribosomal subunit protein uL2cz/uL2cy (272 aa).

Disordered regions lie at residues 1 to 33 (MAIHLYKTSTSSTRNGAVQVKSNPRNNLISGQR) and 220 to 272 (VMNP…RRSK). Alanine 2 bears the N-methylalanine mark. A compositionally biased stretch (polar residues) spans 7–30 (KTSTSSTRNGAVQVKSNPRNNLIS).

This sequence belongs to the universal ribosomal protein uL2 family. In terms of assembly, component of the chloroplast large ribosomal subunit (LSU). Mature 70S chloroplast ribosomes of higher plants consist of a small (30S) and a large (50S) subunit. The 30S small subunit contains 1 molecule of ribosomal RNA (16S rRNA) and 24 different proteins. The 50S large subunit contains 3 rRNA molecules (23S, 5S and 4.5S rRNA) and 33 different proteins.

It localises to the plastid. The protein resides in the chloroplast. Component of the chloroplast ribosome (chloro-ribosome), a dedicated translation machinery responsible for the synthesis of chloroplast genome-encoded proteins, including proteins of the transcription and translation machinery and components of the photosynthetic apparatus. The chain is Large ribosomal subunit protein uL2cz/uL2cy (rpl2-A) from Spinacia oleracea (Spinach).